We begin with the raw amino-acid sequence, 153 residues long: MTINTEVFIRRNKLRRHFESEFRQINNEIREASKAAGVSSFHLKYSQHLLDRAIQREIDETYVFELFHKIKDHVLEVNEFLSMPPRPDIDEDFIDGVEYRPGRLEITDGNLWLGFTVCKPNEKFKDPSLQCRMAIINSRRLPGKASKAVIKTQ.

With respect to regulation, activity is stimulated 10- to 100-fold by host ribosomal protein S1, which also helps confer substrate choice. Essential to the early nucleolytic processing of a number of T4 messenger RNAs. Specifically cleaves after the GG dinucleotide GGAG within consensus 5'-GGAGRAYARAA-3' (R is a purine and Y is a pyrimidine) sequences found mainly in translation initiation sites. This Enterobacteria phage T4 (Bacteriophage T4) protein is Endoribonuclease RegB (regB).